A 582-amino-acid polypeptide reads, in one-letter code: ATP-dependent lipid A-core flippase (582 aa).

Transmembrane regions (helical) follow at residues 27–47 (LIVAVIALVINAISDTYMISL), 69–89 (LIIFVMMFIRGTSGFVSTYCL), 142–162 (ALVSIVREGASIIGLLVLMFY), 165–185 (WQLSLVLFAVAPVVAWGIGVV), and 249–269 (AAANPIIQMIASFAIVAVLYL). The region spanning 28–310 (IVAVIALVIN…LTNVTSQFQR (283 aa)) is the ABC transmembrane type-1 domain. Residues 342-578 (VSVKDVSFTY…NGAYAQLHRI (237 aa)) enclose the ABC transporter domain. Residue 376–383 (GRSGSGKS) coordinates ATP.

The protein belongs to the ABC transporter superfamily. Lipid exporter (TC 3.A.1.106) family. In terms of assembly, homodimer.

Its subcellular location is the cell inner membrane. The catalysed reaction is ATP + H2O + lipid A-core oligosaccharideSide 1 = ADP + phosphate + lipid A-core oligosaccharideSide 2.. Its function is as follows. Involved in lipopolysaccharide (LPS) biosynthesis. Translocates lipid A-core from the inner to the outer leaflet of the inner membrane. Transmembrane domains (TMD) form a pore in the inner membrane and the ATP-binding domain (NBD) is responsible for energy generation. This is ATP-dependent lipid A-core flippase from Vibrio parahaemolyticus serotype O3:K6 (strain RIMD 2210633).